A 448-amino-acid chain; its full sequence is Probable glycine dehydrogenase (decarboxylating) subunit 1 (448 aa).

Belongs to the GcvP family. N-terminal subunit subfamily. In terms of assembly, the glycine cleavage system is composed of four proteins: P, T, L and H. In this organism, the P 'protein' is a heterodimer of two subunits.

It catalyses the reaction N(6)-[(R)-lipoyl]-L-lysyl-[glycine-cleavage complex H protein] + glycine + H(+) = N(6)-[(R)-S(8)-aminomethyldihydrolipoyl]-L-lysyl-[glycine-cleavage complex H protein] + CO2. The glycine cleavage system catalyzes the degradation of glycine. The P protein binds the alpha-amino group of glycine through its pyridoxal phosphate cofactor; CO(2) is released and the remaining methylamine moiety is then transferred to the lipoamide cofactor of the H protein. This chain is Probable glycine dehydrogenase (decarboxylating) subunit 1, found in Geobacillus thermodenitrificans (strain NG80-2).